A 208-amino-acid chain; its full sequence is Small ribosomal subunit protein eS8 (208 aa).

Residues 1–23 (MGISRDSAHKRRATGGKRKSLRK) form a disordered region. The segment covering 8–23 (AHKRRATGGKRKSLRK) has biased composition (basic residues).

This sequence belongs to the eukaryotic ribosomal protein eS8 family. In terms of assembly, component of the small ribosomal subunit. Identified in a IGF2BP1-dependent mRNP granule complex containing untranslated mRNAs. Part of the small subunit (SSU) processome, composed of more than 70 proteins and the RNA chaperone small nucleolar RNA (snoRNA) U3.

The protein localises to the cytoplasm. The protein resides in the membrane. It localises to the nucleus. Its subcellular location is the nucleolus. In terms of biological role, component of the small ribosomal subunit. The ribosome is a large ribonucleoprotein complex responsible for the synthesis of proteins in the cell. Part of the small subunit (SSU) processome, first precursor of the small eukaryotic ribosomal subunit. During the assembly of the SSU processome in the nucleolus, many ribosome biogenesis factors, an RNA chaperone and ribosomal proteins associate with the nascent pre-rRNA and work in concert to generate RNA folding, modifications, rearrangements and cleavage as well as targeted degradation of pre-ribosomal RNA by the RNA exosome. This Drosophila melanogaster (Fruit fly) protein is Small ribosomal subunit protein eS8 (RpS8).